Here is a 659-residue protein sequence, read N- to C-terminus: Forkhead box protein P1-B (659 aa).

2 stretches are compositionally biased toward polar residues: residues 1–16 (MMQESGTEAANGTAHQ) and 32–41 (KSTTPSSDIT). Disordered stretches follow at residues 1-41 (MMQE…SDIT) and 229-263 (ENSVTNNGHRGLDLSSPSPVPLKNHNQHGSTNGQY). A C2H2-type zinc finger spans residues 289–314 (GVCKWPGCEAVFEDFQSFLKHLNNEH). A leucine-zipper region spans residues 331-352 (VQQLELQLAKDKERLQAMMTHL). The segment at 365 to 369 (PLNLV) is CTBP1-binding. The tract at residues 379–413 (PAASPPLSLPQTPTTPTAPLTPLSQTHSVITPTSL) is disordered. Residues 387–404 (LPQTPTTPTAPLTPLSQT) are compositionally biased toward low complexity. Positions 448 to 538 (RPPFTYASLI…PQKISGSPAL (91 aa)) form a DNA-binding region, fork-head. Residues 590–659 (GAMDHGNSNG…EDDHGTEDML (70 aa)) form a disordered region. Residues 595–605 (GNSNGSDSSPG) are compositionally biased toward polar residues. The span at 641–659 (PDFDHHRDYEDDHGTEDML) shows a compositional bias: basic and acidic residues.

As to expression, shows complex and dynamic expression during early embryonic development. Prominent in many regions of the developing central nervous system, particularly in midbrain-hindbrain boundary, hindbrain and spinal cord. Strongly expressed in the retina, ear, branchial arches, hatching gland, heart, pronephric duct, gut, proctodeum, pectoral fin and swim bladder.

The protein resides in the nucleus. In terms of biological role, transcriptional repressor. The protein is Forkhead box protein P1-B (foxp1b) of Danio rerio (Zebrafish).